The chain runs to 248 residues: Probable transcriptional regulatory protein FTL_0929 (248 aa).

It belongs to the TACO1 family.

It localises to the cytoplasm. The polypeptide is Probable transcriptional regulatory protein FTL_0929 (Francisella tularensis subsp. holarctica (strain LVS)).